The chain runs to 229 residues: Ferric nitrobindin-like protein (229 aa).

Residues 1–54 (MSENSTPNNPVVPGAGADGPSLSDSASISGSDAVNLAAEQSKSTAHRNIPGLGD) are disordered. Residues 18–33 (DGPSLSDSASISGSDA) are compositionally biased toward low complexity. Positions 82-88 (GVWRGEG) match the GXWXGXG motif.

It belongs to the nitrobindin family.

This chain is Ferric nitrobindin-like protein, found in Corynebacterium glutamicum (strain R).